Reading from the N-terminus, the 744-residue chain is Catalase-peroxidase (744 aa).

The segment at 1 to 21 (MANESKCPFHQTAGGGTSNRD) is disordered. Positions 91–241 (WHSAGTYRIG…LAAVQMGLIY (151 aa)) form a cross-link, tryptophyl-tyrosyl-methioninium (Trp-Tyr) (with M-267). His92 functions as the Proton acceptor in the catalytic mechanism. A cross-link (tryptophyl-tyrosyl-methioninium (Tyr-Met) (with W-91)) is located at residues 241 to 267 (YVNPEGPEGNPDPVASGKDIRDTFGRM). His282 provides a ligand contact to heme b. The interval 361–387 (GAHQWRPKDGKGANTVPDAHDTTKRHA) is disordered.

This sequence belongs to the peroxidase family. Peroxidase/catalase subfamily. As to quaternary structure, homodimer or homotetramer. The cofactor is heme b. In terms of processing, formation of the three residue Trp-Tyr-Met cross-link is important for the catalase, but not the peroxidase activity of the enzyme.

The enzyme catalyses H2O2 + AH2 = A + 2 H2O. It carries out the reaction 2 H2O2 = O2 + 2 H2O. Functionally, bifunctional enzyme with both catalase and broad-spectrum peroxidase activity. The polypeptide is Catalase-peroxidase (Pseudomonas entomophila (strain L48)).